Here is a 633-residue protein sequence, read N- to C-terminus: NADPH-dependent diflavin oxidoreductase 1 (633 aa).

Residues 5 to 149 (CTIIYATESG…EVEKWSQELI (145 aa)) enclose the Flavodoxin-like domain. Residues 11–16 (TESGTS), 58–61 (STTG), and Asp131 each bind FMN. The FAD-binding FR-type domain maps to 196-442 (TQFYKSKLKV…FIKESGARLP (247 aa)). FAD-binding positions include 377-380 (RPFS) and 412-415 (GLCS). NADP(+) contacts are provided by residues Thr456, 520–521 (SR), 528–532 (KVYVQ), and Asp565. The disordered stretch occupies residues 580 to 610 (KNNNNNNNNNNNNNNNNNNNNNNNNNDDENN). Positions 581 to 604 (NNNNNNNNNNNNNNNNNNNNNNNN) are enriched in low complexity. Trp633 provides a ligand contact to FAD.

This sequence belongs to the NADPH-dependent diflavin oxidoreductase NDOR1 family. In the N-terminal section; belongs to the flavodoxin family. It in the C-terminal section; belongs to the flavoprotein pyridine nucleotide cytochrome reductase family. The cofactor is FAD. FMN is required as a cofactor.

It is found in the cytoplasm. The catalysed reaction is 2 oxidized [2Fe-2S]-[protein] + NADPH = 2 reduced [2Fe-2S]-[protein] + NADP(+) + H(+). NADPH-dependent reductase which is a central component of the cytosolic iron-sulfur (Fe-S) protein assembly (CIA) machinery. Transfers electrons from NADPH via its FAD and FMN prosthetic groups to the [2Fe-2S] cluster of the anamorsin/DRE2 homolog, another key component of the CIA machinery. In turn, this reduced cluster provides electrons for assembly of cytosolic iron-sulfur cluster proteins. This is NADPH-dependent diflavin oxidoreductase 1 (redC) from Dictyostelium discoideum (Social amoeba).